We begin with the raw amino-acid sequence, 217 residues long: NAD(P)H-hydrate epimerase (217 aa).

Residues 1–217 (MRAIENAAMA…VAVADIGLSS (217 aa)) form the YjeF N-terminal domain. 48 to 52 (NNGGD) contributes to the (6S)-NADPHX binding site. Positions 49 and 127 each coordinate K(+). Residues 131 to 137 (GIGQTRP) and Asp165 each bind (6S)-NADPHX. Residue Thr168 coordinates K(+).

It belongs to the NnrE/AIBP family. Requires K(+) as cofactor.

It catalyses the reaction (6R)-NADHX = (6S)-NADHX. The catalysed reaction is (6R)-NADPHX = (6S)-NADPHX. Its function is as follows. Catalyzes the epimerization of the S- and R-forms of NAD(P)HX, a damaged form of NAD(P)H that is a result of enzymatic or heat-dependent hydration. This is a prerequisite for the S-specific NAD(P)H-hydrate dehydratase to allow the repair of both epimers of NAD(P)HX. The chain is NAD(P)H-hydrate epimerase from Cereibacter sphaeroides (strain KD131 / KCTC 12085) (Rhodobacter sphaeroides).